A 326-amino-acid chain; its full sequence is Protein TMED8 (326 aa).

Residues 1 to 99 (MSDRQAAEGP…EGQAPGEQAA (99 aa)) form a disordered region. Low complexity predominate over residues 50 to 65 (SSPLASASDPAAESSP). A GOLD domain is found at 160 to 324 (PPCVWTFAKV…NKTLYFHIYY (165 aa)). Lys-170 is modified (N6-acetyllysine). A disordered region spans residues 234 to 268 (VQVSDSSEDEEEEEDEEEEIEEPVPVGDVERGSRS). Acidic residues predominate over residues 239-255 (SSEDEEEEEDEEEEIEE).

This is Protein TMED8 (Tmed8) from Mus musculus (Mouse).